A 571-amino-acid chain; its full sequence is Streptolysin O (571 aa).

The first 33 residues, 1–33 (MSNKKTFKKYSRVAGLLTAALIIGNLVTANAES), serve as a signal peptide directing secretion. Residues 30-108 (NAESNKQNTA…KKSEEDHTEE (79 aa)) are disordered. Positions 37 to 48 (NTASTETTTTNE) are enriched in low complexity. Basic and acidic residues-rich tracts occupy residues 50–68 (PKPE…KTDD) and 79–108 (APKE…HTEE). The next 4 beta stranded transmembrane spans lie at 260-273 (KSQI…NSKI), 280-289 (IDFKSISKGE), 358-367 (SNDVEAAFSA), and 375-387 (KTNG…LENS). The Conserved undecapeptide signature appears at 529–539 (ECTGLAWEWWR). The Cholesterol binding signature appears at 561 to 562 (TL).

It belongs to the cholesterol-dependent cytolysin family. As to quaternary structure, homooligomeric pore complex of 35 to 50 subunits; when inserted in the host membrane.

Its subcellular location is the secreted. The protein resides in the host cell membrane. In terms of biological role, a cholesterol-dependent toxin that causes cytolysis by forming pores in cholesterol containing host membranes. After binding to target membranes, the protein undergoes a major conformation change, leading to its insertion in the host membrane and formation of an oligomeric pore complex. Cholesterol is required for binding to host membranes, membrane insertion and pore formation; cholesterol binding is mediated by a Thr-Leu pair in the C-terminus. Can be reversibly inactivated by oxidation. The sequence is that of Streptolysin O (slo) from Streptococcus pyogenes serotype M18 (strain MGAS8232).